Consider the following 91-residue polypeptide: ATP-dependent Clp protease adapter protein ClpS (91 aa).

This sequence belongs to the ClpS family. As to quaternary structure, binds to the N-terminal domain of the chaperone ClpA.

Functionally, involved in the modulation of the specificity of the ClpAP-mediated ATP-dependent protein degradation. The polypeptide is ATP-dependent Clp protease adapter protein ClpS (Helicobacter pylori (strain ATCC 700392 / 26695) (Campylobacter pylori)).